Reading from the N-terminus, the 283-residue chain is Protein/nucleic acid deglycase HchA (283 aa).

Zn(2+) contacts are provided by His-86, Glu-91, and His-123. The active-site Nucleophile is Cys-185.

It belongs to the peptidase C56 family. HchA subfamily. Homodimer.

The protein localises to the cytoplasm. The enzyme catalyses N(omega)-(1-hydroxy-2-oxopropyl)-L-arginyl-[protein] + H2O = lactate + L-arginyl-[protein] + H(+). It carries out the reaction N(6)-(1-hydroxy-2-oxopropyl)-L-lysyl-[protein] + H2O = lactate + L-lysyl-[protein] + H(+). It catalyses the reaction S-(1-hydroxy-2-oxopropyl)-L-cysteinyl-[protein] + H2O = lactate + L-cysteinyl-[protein] + H(+). The catalysed reaction is N(omega)-(1-hydroxy-2-oxoethyl)-L-arginyl-[protein] + H2O = L-arginyl-[protein] + glycolate + H(+). The enzyme catalyses N(6)-(1-hydroxy-2-oxoethyl)-L-lysyl-[protein] + H2O = glycolate + L-lysyl-[protein] + H(+). It carries out the reaction S-(1-hydroxy-2-oxoethyl)-L-cysteinyl-[protein] + H2O = glycolate + L-cysteinyl-[protein] + H(+). It catalyses the reaction N(2)-(1-hydroxy-2-oxopropyl)-dGTP + H2O = lactate + dGTP + H(+). The catalysed reaction is N(2)-(1-hydroxy-2-oxopropyl)-GTP + H2O = lactate + GTP + H(+). The enzyme catalyses N(2)-(1-hydroxy-2-oxopropyl)-GDP + H2O = lactate + GDP + H(+). It carries out the reaction N(2)-(1-hydroxy-2-oxopropyl)-GMP + H2O = lactate + GMP + H(+). It catalyses the reaction N(2)-(1-hydroxy-2-oxoethyl)-dGTP + H2O = dGTP + glycolate + H(+). The catalysed reaction is N(2)-(1-hydroxy-2-oxoethyl)-GTP + H2O = glycolate + GTP + H(+). The enzyme catalyses N(2)-(1-hydroxy-2-oxoethyl)-GDP + H2O = glycolate + GDP + H(+). It carries out the reaction N(2)-(1-hydroxy-2-oxoethyl)-GMP + H2O = glycolate + GMP + H(+). It catalyses the reaction an N(2)-(1-hydroxy-2-oxopropyl)-guanosine in RNA + H2O = a guanosine in RNA + lactate + H(+). The catalysed reaction is an N(2)-(1-hydroxy-2-oxopropyl)-2'-deoxyguanosine in DNA + H2O = a 2'-deoxyguanosine in DNA + lactate + H(+). The enzyme catalyses an N(2)-(1-hydroxy-2-oxoethyl)-guanosine in RNA + H2O = a guanosine in RNA + glycolate + H(+). It carries out the reaction an N(2)-(1-hydroxy-2-oxoethyl)-2'-deoxyguanosine in DNA + H2O = a 2'-deoxyguanosine in DNA + glycolate + H(+). Protein and nucleotide deglycase that catalyzes the deglycation of the Maillard adducts formed between amino groups of proteins or nucleotides and reactive carbonyl groups of glyoxals. Thus, functions as a protein deglycase that repairs methylglyoxal- and glyoxal-glycated proteins, and releases repaired proteins and lactate or glycolate, respectively. Deglycates cysteine, arginine and lysine residues in proteins, and thus reactivates these proteins by reversing glycation by glyoxals. Acts on early glycation intermediates (hemithioacetals and aminocarbinols), preventing the formation of Schiff bases and advanced glycation endproducts (AGE). Also functions as a nucleotide deglycase able to repair glycated guanine in the free nucleotide pool (GTP, GDP, GMP, dGTP) and in DNA and RNA. Is thus involved in a major nucleotide repair system named guanine glycation repair (GG repair), dedicated to reversing methylglyoxal and glyoxal damage via nucleotide sanitization and direct nucleic acid repair. Plays an important role in protecting cells from carbonyl stress. The chain is Protein/nucleic acid deglycase HchA from Escherichia coli O81 (strain ED1a).